A 336-amino-acid chain; its full sequence is Ketol-acid reductoisomerase (NADP(+)) 1 (336 aa).

The KARI N-terminal Rossmann domain maps to 2–181 (AKVYYEKDVT…GATRAGVLET (180 aa)). Residues 25-28 (YGSQ), Arg48, Ser52, and 82-85 (DELQ) contribute to the NADP(+) site. The active site involves His107. Position 133 (Gly133) interacts with NADP(+). Residues 182 to 327 (TFKEETETDL…RKLRGMMPFV (146 aa)) form the KARI C-terminal knotted domain. 4 residues coordinate Mg(2+): Asp190, Glu194, Glu226, and Glu230. Position 251 (Ser251) interacts with substrate.

This sequence belongs to the ketol-acid reductoisomerase family. Mg(2+) is required as a cofactor.

The enzyme catalyses (2R)-2,3-dihydroxy-3-methylbutanoate + NADP(+) = (2S)-2-acetolactate + NADPH + H(+). The catalysed reaction is (2R,3R)-2,3-dihydroxy-3-methylpentanoate + NADP(+) = (S)-2-ethyl-2-hydroxy-3-oxobutanoate + NADPH + H(+). The protein operates within amino-acid biosynthesis; L-isoleucine biosynthesis; L-isoleucine from 2-oxobutanoate: step 2/4. It functions in the pathway amino-acid biosynthesis; L-valine biosynthesis; L-valine from pyruvate: step 2/4. Functionally, involved in the biosynthesis of branched-chain amino acids (BCAA). Catalyzes an alkyl-migration followed by a ketol-acid reduction of (S)-2-acetolactate (S2AL) to yield (R)-2,3-dihydroxy-isovalerate. In the isomerase reaction, S2AL is rearranged via a Mg-dependent methyl migration to produce 3-hydroxy-3-methyl-2-ketobutyrate (HMKB). In the reductase reaction, this 2-ketoacid undergoes a metal-dependent reduction by NADPH to yield (R)-2,3-dihydroxy-isovalerate. In Bacillus anthracis, this protein is Ketol-acid reductoisomerase (NADP(+)) 1.